The primary structure comprises 361 residues: 3-isopropylmalate dehydrogenase (361 aa).

G78–E91 is a binding site for NAD(+). Substrate is bound by residues R98, R108, R136, and D226. Mg(2+) is bound by residues D226, D250, and D254. G284–N296 serves as a coordination point for NAD(+).

This sequence belongs to the isocitrate and isopropylmalate dehydrogenases family. LeuB type 1 subfamily. As to quaternary structure, homodimer. Mg(2+) serves as cofactor. It depends on Mn(2+) as a cofactor.

It is found in the cytoplasm. It carries out the reaction (2R,3S)-3-isopropylmalate + NAD(+) = 4-methyl-2-oxopentanoate + CO2 + NADH. It functions in the pathway amino-acid biosynthesis; L-leucine biosynthesis; L-leucine from 3-methyl-2-oxobutanoate: step 3/4. Its function is as follows. Catalyzes the oxidation of 3-carboxy-2-hydroxy-4-methylpentanoate (3-isopropylmalate) to 3-carboxy-4-methyl-2-oxopentanoate. The product decarboxylates to 4-methyl-2 oxopentanoate. The chain is 3-isopropylmalate dehydrogenase from Thermosynechococcus vestitus (strain NIES-2133 / IAM M-273 / BP-1).